The sequence spans 428 residues: Endoplasmic reticulum junction formation protein lunapark (428 aa).

Gly-2 carries the N-myristoyl glycine lipid modification. The Cytoplasmic segment spans residues 2–45; the sequence is GGLFSRWRTKPSTVEVLESIDKEIQALEEFREKNQRLQKLWVGR. Residues 16 to 41 are a coiled coil; that stretch reads EVLESIDKEIQALEEFREKNQRLQKL. The helical transmembrane segment at 46–66 threads the bilayer; it reads LILYSSVLYLFTCLIVYLWYL. The Lumenal segment spans residues 67 to 77; sequence PDEFTARLAMT. A helical transmembrane segment spans residues 78-98; it reads LPFFAFPLIIWSIRTVIIFFF. Over 99–428 the chain is Cytoplasmic; sequence SKRTERNNEA…ELSGESLTAE (330 aa). Residues 102 to 128 are a coiled coil; it reads TERNNEALDDLKSQRKKILEEVMEKET. A phosphoserine mark is found at Ser-114, Ser-153, Ser-177, Ser-182, and Ser-194. Residues 143–247 form a disordered region; sequence SKKAKECEPP…HPPGPPLARP (105 aa). Residues 185-198 show a composition bias toward pro residues; sequence QGPPPQVPVSPGPP. A phosphothreonine mark is found at Thr-211 and Thr-213. Ser-217 and Ser-227 each carry phosphoserine. The C4-type; plays a role in ER morphology zinc finger occupies 276 to 301; it reads CQQCFSHNGMALKEEFEYIAFRCAYC. Phosphoserine is present on residues Ser-321, Ser-353, and Ser-384. Residues 356-428 are disordered; that stretch reads HDVLDDNTEQ…ELSGESLTAE (73 aa). The segment covering 386-401 has biased composition (acidic residues); the sequence is SEEPEEKQETENEEAS. Position 414 is a phosphoserine (Ser-414).

The protein belongs to the lunapark family. In terms of assembly, homodimer; homodimerization requires the C4-type zinc finger motif and decreases during mitosis in a phosphorylation-dependent manner. Myristoylated; myristoylation is necessary for the endoplasmic reticulum (ER) three-way ER tubular junction formation, but is not required neither for membrane translocation, membrane topology formation, nor for the specific localization to ER membranes. Post-translationally, phosphorylated. Phosphorylation occurs at Ser-177, Ser-182, Ser-217, Ser-227, Ser-321 and Ser-384 during interphase. Phosphorylation occurs at Ser-114, Ser-153, Ser-194, Thr-211 and Ser-353 during mitosis; these phosphorylations reduce both its homodimerization and the ER three-way tubular junction formation. In terms of processing, subject to proteasomal degradation following phosphorylation during mitosis. As to expression, expressed in neural precursor cells, where it is detected at the growth-cone-like structure and branching sites of neurite-like processes.

The protein localises to the endoplasmic reticulum membrane. Its function is as follows. Endoplasmic reticulum (ER)-shaping membrane protein that plays a role in determining ER morphology. Involved in the stabilization of nascent three-way ER tubular junctions within the ER network. May also play a role as a curvature-stabilizing protein within the three-way ER tubular junction network. May be involved in limb development. Is involved in central nervous system development. The sequence is that of Endoplasmic reticulum junction formation protein lunapark from Homo sapiens (Human).